The primary structure comprises 402 residues: Beta-1,4-galactosyltransferase 1 (402 aa).

Over 1–24 (MKFREPLLGGSAAMPGASLQRACR) the chain is Cytoplasmic. The chain crosses the membrane as a helical; Signal-anchor for type II membrane protein span at residues 25–44 (LLVAVCALHLGVTLVYYLAG). The Lumenal segment spans residues 45–402 (RDLRRLPQLV…KITVDIGTPS (358 aa)). The segment at 77–130 (LRLRGVAPPPPLQNSSKPRSRAPSNLDAYSHPGPGPGPGSNLTSAPVPSTTTRS) is disordered. N-linked (GlcNAc...) asparagine glycans are attached at residues Asn90 and Asn117. Polar residues predominate over residues 116–130 (SNLTSAPVPSTTTRS). Cysteines 134 and 176 form a disulfide. Residues 187 to 191 (PFRNR), 226 to 228 (FNR), 253 to 254 (VD), and Trp314 contribute to the UDP-alpha-D-galactose site. A disulfide bond links Cys247 and Cys266. A Mn(2+)-binding site is contributed by Asp254. 316-319 (GEDD) is a binding site for N-acetyl-D-glucosamine. His347 serves as a coordination point for Mn(2+). 347 to 349 (HSR) provides a ligand contact to UDP-alpha-D-galactose. Arg359 is an N-acetyl-D-glucosamine binding site.

The protein belongs to the glycosyltransferase 7 family. In terms of assembly, homodimer; and heterodimer with alpha-lactalbumin to form lactose synthase. Interacts (via N-terminal cytoplasmic domain) with UBE2Q1 (via N-terminus); the interaction is direct. It depends on Mn(2+) as a cofactor. Post-translationally, the soluble form derives from the membrane forms by proteolytic processing. In terms of tissue distribution, detected in milk (at protein level).

Its subcellular location is the golgi apparatus. The protein resides in the golgi stack membrane. It localises to the cell membrane. It is found in the cell surface. The protein localises to the cell projection. Its subcellular location is the filopodium. The protein resides in the secreted. The catalysed reaction is D-glucose + UDP-alpha-D-galactose = lactose + UDP + H(+). It catalyses the reaction an N-acetyl-beta-D-glucosaminyl derivative + UDP-alpha-D-galactose = a beta-D-galactosyl-(1-&gt;4)-N-acetyl-beta-D-glucosaminyl derivative + UDP + H(+). The enzyme catalyses N-acetyl-D-glucosamine + UDP-alpha-D-galactose = beta-D-galactosyl-(1-&gt;4)-N-acetyl-D-glucosamine + UDP + H(+). It carries out the reaction a beta-D-GlcNAc-(1-&gt;3)-beta-D-Gal-(1-&gt;4)-beta-D-Glc-(1&lt;-&gt;1)-Cer(d18:1(4E)) + UDP-alpha-D-galactose = a neolactoside nLc4Cer(d18:1(4E)) + UDP + H(+). The catalysed reaction is a beta-D-glucosylceramide + UDP-alpha-D-galactose = a beta-D-galactosyl-(1-&gt;4)-beta-D-glucosyl-(1&lt;-&gt;1)-ceramide + UDP + H(+). It catalyses the reaction a neolactoside IV(3)-beta-GlcNAc-nLc4Cer + UDP-alpha-D-galactose = a neolactoside nLc6Cer + UDP + H(+). Its pathway is protein modification; protein glycosylation. In terms of biological role, the Golgi complex form catalyzes the production of lactose in the lactating mammary gland and could also be responsible for the synthesis of complex-type N-linked oligosaccharides in many glycoproteins as well as the carbohydrate moieties of glycolipids. Its function is as follows. The cell surface form functions as a recognition molecule during a variety of cell to cell and cell to matrix interactions, as those occurring during development and egg fertilization, by binding to specific oligosaccharide ligands on opposing cells or in the extracellular matrix. The secreted form is responsible for the synthesis of complex-type to N-linked oligosaccharides in many glycoproteins as well as the carbohydrate moieties of glycolipids. In Bos taurus (Bovine), this protein is Beta-1,4-galactosyltransferase 1 (B4GALT1).